Here is a 271-residue protein sequence, read N- to C-terminus: Acetyl-coenzyme A carboxylase carboxyl transferase subunit beta (271 aa).

The 251-residue stretch at 21-271 (LWIQCPYCKQ…LGDLLALHTA (251 aa)) folds into the CoA carboxyltransferase N-terminal domain. Residues cysteine 25, cysteine 28, cysteine 43, and cysteine 46 each contribute to the Zn(2+) site. Residues 25–46 (CPYCKQGSYRESLGNAQVCPHC) form a C4-type zinc finger.

This sequence belongs to the AccD/PCCB family. In terms of assembly, acetyl-CoA carboxylase is a heterohexamer composed of biotin carboxyl carrier protein (AccB), biotin carboxylase (AccC) and two subunits each of ACCase subunit alpha (AccA) and ACCase subunit beta (AccD). Zn(2+) serves as cofactor.

The protein resides in the cytoplasm. The catalysed reaction is N(6)-carboxybiotinyl-L-lysyl-[protein] + acetyl-CoA = N(6)-biotinyl-L-lysyl-[protein] + malonyl-CoA. The protein operates within lipid metabolism; malonyl-CoA biosynthesis; malonyl-CoA from acetyl-CoA: step 1/1. Its function is as follows. Component of the acetyl coenzyme A carboxylase (ACC) complex. Biotin carboxylase (BC) catalyzes the carboxylation of biotin on its carrier protein (BCCP) and then the CO(2) group is transferred by the transcarboxylase to acetyl-CoA to form malonyl-CoA. In Lacticaseibacillus paracasei (strain ATCC 334 / BCRC 17002 / CCUG 31169 / CIP 107868 / KCTC 3260 / NRRL B-441) (Lactobacillus paracasei), this protein is Acetyl-coenzyme A carboxylase carboxyl transferase subunit beta.